A 147-amino-acid chain; its full sequence is Protein BUD31 homolog (147 aa).

Positions 8-12 (RRVRK) match the Nuclear localization signal motif.

Belongs to the BUD31 (G10) family. In terms of assembly, identified in the spliceosome C complex.

The protein localises to the nucleus. Functionally, involved in pre-mRNA splicing process. The polypeptide is Protein BUD31 homolog (Caenorhabditis elegans).